We begin with the raw amino-acid sequence, 235 residues long: Probable transcriptional regulatory protein Cj1172c (235 aa).

It belongs to the TACO1 family.

The protein resides in the cytoplasm. This chain is Probable transcriptional regulatory protein Cj1172c, found in Campylobacter jejuni subsp. jejuni serotype O:2 (strain ATCC 700819 / NCTC 11168).